Here is a 450-residue protein sequence, read N- to C-terminus: Chromosomal replication initiator protein DnaA (450 aa).

Residues 1 to 84 (MENIHDLWDR…AVKFIIPPNQ (84 aa)) are domain I, interacts with DnaA modulators. The interval 84–111 (QDDEELEFQSSKKKQRKPYEETNDFPQS) is domain II. The segment at 89-108 (LEFQSSKKKQRKPYEETNDF) is disordered. Positions 112 to 328 (MLNPKYTFDT…GALIRVVAYS (217 aa)) are domain III, AAA+ region. 4 residues coordinate ATP: G156, G158, K159, and T160. The segment at 329-450 (SLINKEITAD…QEIQEKLKQL (122 aa)) is domain IV, binds dsDNA.

Belongs to the DnaA family. Oligomerizes as a right-handed, spiral filament on DNA at oriC.

The protein localises to the cytoplasm. Functionally, plays an essential role in the initiation and regulation of chromosomal replication. ATP-DnaA binds to the origin of replication (oriC) to initiate formation of the DNA replication initiation complex once per cell cycle. Binds the DnaA box (a 9 base pair repeat at the origin) and separates the double-stranded (ds)DNA. Forms a right-handed helical filament on oriC DNA; dsDNA binds to the exterior of the filament while single-stranded (ss)DNA is stabiized in the filament's interior. The ATP-DnaA-oriC complex binds and stabilizes one strand of the AT-rich DNA unwinding element (DUE), permitting loading of DNA polymerase. After initiation quickly degrades to an ADP-DnaA complex that is not apt for DNA replication. Binds acidic phospholipids. The sequence is that of Chromosomal replication initiator protein DnaA from Geobacillus kaustophilus (strain HTA426).